The sequence spans 66 residues: MAVPKKKTSKSRRNMRRSHLALGKVNVIVDSQTGEYKLPHHVSLVDGTYNNRLVVTKKIKTEEEVA.

Belongs to the bacterial ribosomal protein bL32 family.

The polypeptide is Large ribosomal subunit protein bL32 (Rickettsia conorii (strain ATCC VR-613 / Malish 7)).